The primary structure comprises 193 residues: Anthranilate synthase component 2 (193 aa).

Positions aspartate 3–lysine 193 constitute a Glutamine amidotransferase type-1 domain. Residue glycine 57–glycine 59 coordinates L-glutamine. The active-site Nucleophile; for GATase activity is the cysteine 84. L-glutamine is bound by residues glutamine 88 and serine 134 to leucine 135. Residues histidine 170 and glutamate 172 each act as for GATase activity in the active site.

Heterotetramer consisting of two non-identical subunits: a beta subunit (TrpG) and a large alpha subunit (TrpE).

It catalyses the reaction chorismate + L-glutamine = anthranilate + pyruvate + L-glutamate + H(+). It participates in amino-acid biosynthesis; L-tryptophan biosynthesis; L-tryptophan from chorismate: step 1/5. Part of a heterotetrameric complex that catalyzes the two-step biosynthesis of anthranilate, an intermediate in the biosynthesis of L-tryptophan. In the first step, the glutamine-binding beta subunit (TrpG) of anthranilate synthase (AS) provides the glutamine amidotransferase activity which generates ammonia as a substrate that, along with chorismate, is used in the second step, catalyzed by the large alpha subunit of AS (TrpE) to produce anthranilate. In the absence of TrpG, TrpE can synthesize anthranilate directly from chorismate and high concentrations of ammonia. The sequence is that of Anthranilate synthase component 2 (trpG) from Serratia marcescens.